We begin with the raw amino-acid sequence, 345 residues long: D-alanine--D-alanine ligase (345 aa).

The ATP-grasp domain maps to 137-342; the sequence is KAAFSAAGLP…LEELVHQLLE (206 aa). Position 169 to 224 (169 to 224) interacts with ATP; the sequence is ETQLGYPCFIKPANLGSSVGISKATNRSELQAGLDLAASHDSRLLVEKGLQVRELE. Positions 295, 309, and 311 each coordinate Mg(2+).

It belongs to the D-alanine--D-alanine ligase family. The cofactor is Mg(2+). Requires Mn(2+) as cofactor.

The protein resides in the cytoplasm. The catalysed reaction is 2 D-alanine + ATP = D-alanyl-D-alanine + ADP + phosphate + H(+). The protein operates within cell wall biogenesis; peptidoglycan biosynthesis. Its function is as follows. Cell wall formation. The protein is D-alanine--D-alanine ligase of Synechococcus sp. (strain RCC307).